A 156-amino-acid polypeptide reads, in one-letter code: FUN14 domain-containing protein 1 (156 aa).

The YXXL motif lies at 19 to 22 (YEVL). The next 3 helical transmembrane spans lie at 49-69 (YSVATQIVMGGVTGWCAGFLF), 76-96 (AATAVGGGFLLLQIASHSGYV), and 135-155 (FIKQNIVVSSGFVGGFLLGLA).

Belongs to the FUN14 family.

It localises to the mitochondrion outer membrane. Its function is as follows. Acts as an activator of hypoxia-induced mitophagy, an important mechanism for mitochondrial quality control. The protein is FUN14 domain-containing protein 1 (FUNDC1) of Gallus gallus (Chicken).